Consider the following 323-residue polypeptide: Elongation factor P--(R)-beta-lysine ligase (323 aa).

76–78 serves as a coordination point for substrate; the sequence is SPE. ATP contacts are provided by residues 100-102 and asparagine 109; that span reads RNE. Tyrosine 118 provides a ligand contact to substrate. 242 to 243 contacts ATP; that stretch reads EL. Residue glutamate 249 coordinates substrate. An ATP-binding site is contributed by glycine 298.

This sequence belongs to the class-II aminoacyl-tRNA synthetase family. EpmA subfamily. As to quaternary structure, homodimer.

The catalysed reaction is D-beta-lysine + L-lysyl-[protein] + ATP = N(6)-((3R)-3,6-diaminohexanoyl)-L-lysyl-[protein] + AMP + diphosphate + H(+). Functionally, with EpmB is involved in the beta-lysylation step of the post-translational modification of translation elongation factor P (EF-P). Catalyzes the ATP-dependent activation of (R)-beta-lysine produced by EpmB, forming a lysyl-adenylate, from which the beta-lysyl moiety is then transferred to the epsilon-amino group of a conserved specific lysine residue in EF-P. The chain is Elongation factor P--(R)-beta-lysine ligase from Haemophilus influenzae (strain PittGG).